Consider the following 124-residue polypeptide: Small ribosomal subunit protein bS6 (124 aa).

Positions 96–124 are disordered; sequence ETGPSPMMKEVQREEAKKAAAAQPTEAQA. A compositionally biased stretch (low complexity) spans 114 to 124; that stretch reads AAAAQPTEAQA.

Belongs to the bacterial ribosomal protein bS6 family.

Its function is as follows. Binds together with bS18 to 16S ribosomal RNA. In Burkholderia vietnamiensis (strain G4 / LMG 22486) (Burkholderia cepacia (strain R1808)), this protein is Small ribosomal subunit protein bS6.